Consider the following 443-residue polypeptide: UDP-N-acetylmuramate--L-alanine ligase (443 aa).

110-116 lines the ATP pocket; sequence GAHGKTS.

It belongs to the MurCDEF family.

Its subcellular location is the cytoplasm. It carries out the reaction UDP-N-acetyl-alpha-D-muramate + L-alanine + ATP = UDP-N-acetyl-alpha-D-muramoyl-L-alanine + ADP + phosphate + H(+). Its pathway is cell wall biogenesis; peptidoglycan biosynthesis. Functionally, cell wall formation. The polypeptide is UDP-N-acetylmuramate--L-alanine ligase (Streptococcus equi subsp. zooepidemicus (strain MGCS10565)).